We begin with the raw amino-acid sequence, 280 residues long: uncharacterized protein (280 aa).

2 disordered regions span residues 1-124 and 177-280; these read MPRD…QREA and LEEE…LSSK. 2 stretches are compositionally biased toward basic residues: residues 16-36 and 48-83; these read SRRR…RSRR and YSRR…RQKS. 2 stretches are compositionally biased toward basic and acidic residues: residues 102–124 and 182–259; these read AKNR…QREA and EASL…ERLK.

This is an uncharacterized protein from Arabidopsis thaliana (Mouse-ear cress).